A 481-amino-acid polypeptide reads, in one-letter code: RAC-beta serine/threonine-protein kinase (481 aa).

Met-1 is modified (N-acetylmethionine). Residues 5 to 108 (SVIKEGWLHK…WMRAIQMVAN (104 aa)) form the PH domain. Residue Ser-34 is modified to Phosphoserine. Cys-60 and Cys-77 are disulfide-bonded. Ser-126 is subject to Phosphoserine. O-linked (GlcNAc) serine glycosylation is found at Ser-128 and Ser-131. Residues 152-409 (FDYLKLLGKG…AKEVMEHRFF (258 aa)) enclose the Protein kinase domain. ATP contacts are provided by residues 158–166 (LGKGTFGKV) and Lys-181. Asp-275 acts as the Proton acceptor in catalysis. Mn(2+) is bound by residues Asn-280 and Asp-293. A disulfide bond links Cys-297 and Cys-311. A glycan (O-linked (GlcNAc) threonine) is linked at Thr-306. Residue Thr-309 is modified to Phosphothreonine; by PDPK1. The O-linked (GlcNAc) threonine glycan is linked to Thr-313. The AGC-kinase C-terminal domain occupies 410–481 (LSINWQDVVQ…QFSYSASIRE (72 aa)). A Phosphoserine modification is found at Ser-447. Thr-451 carries the post-translational modification Phosphothreonine. A phosphoserine; by MTOR mark is found at Ser-474 and Ser-478. An O-linked (GlcNAc) serine; alternate glycan is attached at Ser-474.

It belongs to the protein kinase superfamily. AGC Ser/Thr protein kinase family. RAC subfamily. As to quaternary structure, interacts with BTBD10. Interacts with KCTD20. Interacts (via PH domain) with MTCP1, TCL1A and TCL1B; this interaction may facilitate AKT2 oligomerization and phosphorylation, hence increasing kinase activity. Interacts with PHB2; this interaction may be important for myogenic differentiation. Interacts (when phosphorylated) with CLIP3/ClipR-59; this interaction promotes cell membrane localization. Interacts with WDFY2 (via WD repeats 1-3). Post-translationally, phosphorylation on Thr-309 and Ser-474 is required for full activity. Phosphorylation of the activation loop at Thr-309 by PDPK1/PDK1 is a prerequisite for full activation. Phosphorylated and activated by PDPK1/PDK1 in the presence of phosphatidylinositol 3,4,5-trisphosphate. Phosphorylation by mTORC2 in response to growth factors plays a key role in AKT1 activation: mTORC2 phosphorylates different sites depending on the context, such as Ser-474 or Ser-478, thereby facilitating subsequent phosphorylation of the activation loop by PDPK1/PDK1. In terms of processing, ubiquitinated; undergoes both 'Lys-48'- and 'Lys-63'-linked polyubiquitination. TRAF6-induced 'Lys-63'-linked AKT2 ubiquitination. When fully phosphorylated and translocated into the nucleus, undergoes 'Lys-48'-polyubiquitination catalyzed by TTC3, leading to its degradation by the proteasome. O-GlcNAcylation at Thr-306 and Thr-313 inhibits activating phosphorylation at Thr-309 via disrupting the interaction between AKT and PDPK1/PDK1.

Its subcellular location is the cytoplasm. The protein resides in the nucleus. It is found in the cell membrane. The protein localises to the early endosome. It catalyses the reaction L-seryl-[protein] + ATP = O-phospho-L-seryl-[protein] + ADP + H(+). The catalysed reaction is L-threonyl-[protein] + ATP = O-phospho-L-threonyl-[protein] + ADP + H(+). Two specific sites, one in the kinase domain (Thr-309) and the other in the C-terminal regulatory region (Ser-474), need to be phosphorylated for its full activation. AKT2 phosphorylation of PKP1 is induced by insulin. Inhibited by Akt inhibitor MK2206. Its function is as follows. AKT2 is one of 3 closely related serine/threonine-protein kinases (AKT1, AKT2 and AKT3) called the AKT kinases, and which regulate many processes including metabolism, proliferation, cell survival, growth and angiogenesis. This is mediated through serine and/or threonine phosphorylation of a range of downstream substrates. Over 100 substrate candidates have been reported so far, but for most of them, no isoform specificity has been reported. AKT is responsible of the regulation of glucose uptake by mediating insulin-induced translocation of the SLC2A4/GLUT4 glucose transporter to the cell surface. Phosphorylation of PTPN1 at 'Ser-50' negatively modulates its phosphatase activity preventing dephosphorylation of the insulin receptor and the attenuation of insulin signaling. Phosphorylation of TBC1D4 triggers the binding of this effector to inhibitory 14-3-3 proteins, which is required for insulin-stimulated glucose transport. AKT also regulates the storage of glucose in the form of glycogen by phosphorylating GSK3A at 'Ser-21' and GSK3B at 'Ser-9', resulting in inhibition of its kinase activity. Phosphorylation of GSK3 isoforms by AKT is also thought to be one mechanism by which cell proliferation is driven. AKT also regulates cell survival via the phosphorylation of MAP3K5 (apoptosis signal-related kinase). Phosphorylation of 'Ser-83' decreases MAP3K5 kinase activity stimulated by oxidative stress and thereby prevents apoptosis. AKT mediates insulin-stimulated protein synthesis by phosphorylating TSC2 at 'Ser-939' and 'Thr-1462', thereby activating mTORC1 signaling and leading to both phosphorylation of 4E-BP1 and in activation of RPS6KB1. AKT is involved in the phosphorylation of members of the FOXO factors (Forkhead family of transcription factors), leading to binding of 14-3-3 proteins and cytoplasmic localization. In particular, FOXO1 is phosphorylated at 'Thr-24', 'Ser-256' and 'Ser-319'. FOXO3 and FOXO4 are phosphorylated on equivalent sites. AKT has an important role in the regulation of NF-kappa-B-dependent gene transcription and positively regulates the activity of CREB1 (cyclic AMP (cAMP)-response element binding protein). The phosphorylation of CREB1 induces the binding of accessory proteins that are necessary for the transcription of pro-survival genes such as BCL2 and MCL1. AKT phosphorylates 'Ser-454' on ATP citrate lyase (ACLY), thereby potentially regulating ACLY activity and fatty acid synthesis. Activates the 3B isoform of cyclic nucleotide phosphodiesterase (PDE3B) via phosphorylation of 'Ser-273', resulting in reduced cyclic AMP levels and inhibition of lipolysis. Phosphorylates PIKFYVE on 'Ser-318', which results in increased PI(3)P-5 activity. The Rho GTPase-activating protein DLC1 is another substrate and its phosphorylation is implicated in the regulation cell proliferation and cell growth. AKT plays a role as key modulator of the AKT-mTOR signaling pathway controlling the tempo of the process of newborn neurons integration during adult neurogenesis, including correct neuron positioning, dendritic development and synapse formation. Signals downstream of phosphatidylinositol 3-kinase (PI(3)K) to mediate the effects of various growth factors such as platelet-derived growth factor (PDGF), epidermal growth factor (EGF), insulin and insulin-like growth factor I (IGF-I). AKT mediates the antiapoptotic effects of IGF-I. Essential for the SPATA13-mediated regulation of cell migration and adhesion assembly and disassembly. May be involved in the regulation of the placental development. In response to lysophosphatidic acid stimulation, inhibits the ciliogenesis cascade. In this context, phosphorylates WDR44, hence stabilizing its interaction with Rab11 and preventing the formation of the ciliogenic Rab11-FIP3-RAB3IP complex. Also phosphorylates RAB3IP/Rabin8, thus may affect RAB3IP guanine nucleotide exchange factor (GEF) activity toward Rab8, which is important for cilia growth. Phosphorylates PKP1, facilitating its interaction with YWHAG and translocation to the nucleus, ultimately resulting in a reduction in keratinocyte intercellular adhesion. Phosphorylation of PKP1 increases PKP1 protein stability, translocation to the cytoplasm away from desmosome plaques and PKP1-driven cap-dependent translation. Functionally, several AKT2-specific substrates have been identified, including ANKRD2, C2CD5, CLK2 and PITX2. May play a role in myoblast differentiation. In this context, may act through PITX2 phosphorylation. Unphosphorylated PITX2 associates with an ELAVL1/HuR-containing complex, which stabilizes cyclin mRNA and ensuring cell proliferation. Phosphorylation by AKT2 impairs this association, leading to CCND1 mRNA destabilization and progression towards differentiation. Also involved in the negative regulation of myogenesis in response to stress conditions. In this context, acts by phosphorylating ANKRD2. May also be a key regulator of glucose uptake. Regulates insulin-stimulated glucose transport by the increase of glucose transporter GLUT4 translocation from intracellular stores to the plasma membrane. In this context, acts by phosphorylating C2CD5/CDP138 on 'Ser-197' in insulin-stimulated adipocytes. Through the phosphorylation of CLK2 on 'Thr-343', involved in insulin-regulated suppression of hepatic gluconeogenesis. This Mus musculus (Mouse) protein is RAC-beta serine/threonine-protein kinase (Akt2).